A 138-amino-acid polypeptide reads, in one-letter code: MATILVDVVSAEASIFSGPAKFVALPGESGELGILPGHTPLITRIQPGAVRIEKEDGSEEFVFVAGGILEVQPQHVTVLADTAIRGTDLDEAKAQEAKRAAEELMQNQSSDLDIARAQSELAVAAAQLAAIARLRRKK.

The protein belongs to the ATPase epsilon chain family. F-type ATPases have 2 components, CF(1) - the catalytic core - and CF(0) - the membrane proton channel. CF(1) has five subunits: alpha(3), beta(3), gamma(1), delta(1), epsilon(1). CF(0) has three main subunits: a, b and c.

Its subcellular location is the cell inner membrane. In terms of biological role, produces ATP from ADP in the presence of a proton gradient across the membrane. The sequence is that of ATP synthase epsilon chain from Cupriavidus pinatubonensis (strain JMP 134 / LMG 1197) (Cupriavidus necator (strain JMP 134)).